Consider the following 278-residue polypeptide: HTH-type transcriptional activator RhaS (278 aa).

Positions 174-272 (NLLLAWLEDH…NWSPRDIRQG (99 aa)) constitute an HTH araC/xylS-type domain. DNA-binding regions (H-T-H motif) lie at residues 191 to 212 (DAVA…KQQT) and 239 to 262 (VTDI…RREF).

In terms of assembly, binds DNA as a dimer.

It is found in the cytoplasm. Functionally, activates expression of the rhaBAD and rhaT operons. This is HTH-type transcriptional activator RhaS from Shigella sonnei (strain Ss046).